A 241-amino-acid polypeptide reads, in one-letter code: Megakaryocyte and platelet inhibitory receptor G6b (241 aa).

The signal sequence occupies residues 1-17 (MAVFLQLLPLLLSRAQG). Residues 18-142 (NPGASLDGRP…GPTHGSVYPQ (125 aa)) are Extracellular-facing. N-linked (GlcNAc...) asparagine glycosylation is present at asparagine 32. The helical transmembrane segment at 143–163 (LLIPLLGAGLVLGLGALGLVW) threads the bilayer. At 164–241 (WLHRRLPPQP…DASTIYAVVV (78 aa)) the chain is on the cytoplasmic side. 2 consecutive short sequence motifs (ITIM motif) follow at residues 209–214 (LLYADL) and 235–240 (TIYAVV). Position 211 is a phosphotyrosine (tyrosine 211).

In terms of assembly, interacts (via ITIM motif) with PTPN6 and PTPN11. Binds to heparin. In terms of processing, all isoforms are N-glycosylated. Post-translationally, isoform E is O-glycosylated. Phosphorylated. In terms of tissue distribution, expressed in platelets. Expressed in a restricted set of hematopoietic cell lines including the erythroleukemia cell line K-562 and the T-cell leukemia cell lines MOLT-4 and Jurkat. Not detected in the monocyte-like cell line U-937, the B-cell-like cell line Raji, the fibroblast cell lines TK and HeLa, or the natural killer cell lines NKL, NK 62 and YT.

Its subcellular location is the endoplasmic reticulum. The protein localises to the golgi apparatus. The protein resides in the cell membrane. Inhibitory receptor that acts as a critical regulator of hematopoietic lineage differentiation, megakaryocyte function and platelet production. Inhibits platelet aggregation and activation by agonists such as ADP and collagen-related peptide. This regulation of megakaryocate function as well as platelet production ann activation is done through the inhibition (via the 2 ITIM motifs) of the receptors CLEC1B and GP6:FcRgamma signaling. Appears to operate in a calcium-independent manner. In terms of biological role, isoform B, displayed in this entry, is the only isoform to contain both a transmembrane region and 2 immunoreceptor tyrosine-based inhibitor motifs (ITIMs) and, thus, the only one which probably has a role of inhibitory receptor. Isoform A may be the activating counterpart of isoform B. The chain is Megakaryocyte and platelet inhibitory receptor G6b from Homo sapiens (Human).